The primary structure comprises 255 residues: tRNA (guanine-N(1)-)-methyltransferase (255 aa).

S-adenosyl-L-methionine is bound by residues G113 and 133-138; that span reads IGDYVL.

The protein belongs to the RNA methyltransferase TrmD family. In terms of assembly, homodimer.

The protein resides in the cytoplasm. The catalysed reaction is guanosine(37) in tRNA + S-adenosyl-L-methionine = N(1)-methylguanosine(37) in tRNA + S-adenosyl-L-homocysteine + H(+). In terms of biological role, specifically methylates guanosine-37 in various tRNAs. The sequence is that of tRNA (guanine-N(1)-)-methyltransferase from Escherichia fergusonii (strain ATCC 35469 / DSM 13698 / CCUG 18766 / IAM 14443 / JCM 21226 / LMG 7866 / NBRC 102419 / NCTC 12128 / CDC 0568-73).